The chain runs to 226 residues: UPF0758 protein SUB0843 (226 aa).

The 123-residue stretch at 103–225 folds into the MPN domain; sequence QILSSYQVAK…YYSFREKSDI (123 aa). Residues histidine 174, histidine 176, and aspartate 187 each contribute to the Zn(2+) site. Residues 174 to 187 carry the JAMM motif motif; that stretch reads HNHPSGLTNPSEND.

It belongs to the UPF0758 family.

The protein is UPF0758 protein SUB0843 of Streptococcus uberis (strain ATCC BAA-854 / 0140J).